The sequence spans 376 residues: Chorismate synthase ARO2 (376 aa).

S2 is subject to N-acetylserine. The active site involves H17. The tract at residues 39–61 (IQPQLTRRRPGQSKLSTPRDEKD) is disordered. Residues H104 and D339 contribute to the active site.

This sequence belongs to the chorismate synthase family. As to quaternary structure, homotetramer.

It carries out the reaction 5-O-(1-carboxyvinyl)-3-phosphoshikimate = chorismate + phosphate. The enzyme catalyses FMNH2 + NADP(+) = FMN + NADPH + 2 H(+). The protein operates within metabolic intermediate biosynthesis; chorismate biosynthesis; chorismate from D-erythrose 4-phosphate and phosphoenolpyruvate: step 7/7. In terms of biological role, bifunctional chorismate synthase and flavin reductase that catalyzes the conversion of 5-enolpyruvylshikimate 3-phosphate (EPSP) to form chorismate, which is the last common intermediate in the synthesis of the three aromatic amino acids phenylalanine, tyrosine and tryptophan. Also acts as a flavin reductase (FR) able to generate reduced flavin mononucleotide in the presence of NADPH. This is Chorismate synthase ARO2 from Saccharomyces cerevisiae (strain ATCC 204508 / S288c) (Baker's yeast).